Here is a 428-residue protein sequence, read N- to C-terminus: Light-independent protochlorophyllide reductase subunit N (428 aa).

[4Fe-4S] cluster is bound by residues cysteine 31, cysteine 56, and cysteine 117.

It belongs to the BchN/ChlN family. In terms of assembly, protochlorophyllide reductase is composed of three subunits; BchL, BchN and BchB. Forms a heterotetramer of two BchB and two BchN subunits. [4Fe-4S] cluster serves as cofactor.

The catalysed reaction is chlorophyllide a + oxidized 2[4Fe-4S]-[ferredoxin] + 2 ADP + 2 phosphate = protochlorophyllide a + reduced 2[4Fe-4S]-[ferredoxin] + 2 ATP + 2 H2O. The protein operates within porphyrin-containing compound metabolism; bacteriochlorophyll biosynthesis (light-independent). Its function is as follows. Component of the dark-operative protochlorophyllide reductase (DPOR) that uses Mg-ATP and reduced ferredoxin to reduce ring D of protochlorophyllide (Pchlide) to form chlorophyllide a (Chlide). This reaction is light-independent. The NB-protein (BchN-BchB) is the catalytic component of the complex. In Rhodopseudomonas palustris (strain BisB18), this protein is Light-independent protochlorophyllide reductase subunit N.